We begin with the raw amino-acid sequence, 135 residues long: Ribosome-binding factor A (135 aa).

The protein belongs to the RbfA family. Monomer. Binds 30S ribosomal subunits, but not 50S ribosomal subunits or 70S ribosomes.

It is found in the cytoplasm. One of several proteins that assist in the late maturation steps of the functional core of the 30S ribosomal subunit. Associates with free 30S ribosomal subunits (but not with 30S subunits that are part of 70S ribosomes or polysomes). Required for efficient processing of 16S rRNA. May interact with the 5'-terminal helix region of 16S rRNA. This chain is Ribosome-binding factor A, found in Rhodopseudomonas palustris (strain HaA2).